The sequence spans 195 residues: Small ribosomal subunit protein uS4c (195 aa).

Residues 82-143 enclose the S4 RNA-binding domain; it reads MRLDNILFRL…KQRSKALIQN (62 aa).

The protein belongs to the universal ribosomal protein uS4 family. In terms of assembly, part of the 30S ribosomal subunit. Contacts protein S5. The interaction surface between S4 and S5 is involved in control of translational fidelity.

It localises to the plastid. The protein resides in the chloroplast. Its function is as follows. One of the primary rRNA binding proteins, it binds directly to 16S rRNA where it nucleates assembly of the body of the 30S subunit. In terms of biological role, with S5 and S12 plays an important role in translational accuracy. The sequence is that of Small ribosomal subunit protein uS4c (rps4) from Gladiolus murielae (Abyssinian gladiolus).